The primary structure comprises 313 residues: Ribosomal RNA small subunit methyltransferase H (313 aa).

S-adenosyl-L-methionine contacts are provided by residues G35–H37, D55, F79, D101, and Q108.

Belongs to the methyltransferase superfamily. RsmH family.

It localises to the cytoplasm. The enzyme catalyses cytidine(1402) in 16S rRNA + S-adenosyl-L-methionine = N(4)-methylcytidine(1402) in 16S rRNA + S-adenosyl-L-homocysteine + H(+). Specifically methylates the N4 position of cytidine in position 1402 (C1402) of 16S rRNA. In Shigella dysenteriae serotype 1 (strain Sd197), this protein is Ribosomal RNA small subunit methyltransferase H.